The chain runs to 141 residues: MAKKVIRVIKLQIPAGKANPAPPVGPALGQAGVNIMGFCKEFNARTESEVGMIIPVEITVFEDRSFTFITKTPPAAVLLKKAAGIESGSGVPNKTKVATLKRDKVREIAELKRPDLNAASVEAAMRMVEGTARSMGIVIED.

The protein belongs to the universal ribosomal protein uL11 family. Part of the ribosomal stalk of the 50S ribosomal subunit. Interacts with L10 and the large rRNA to form the base of the stalk. L10 forms an elongated spine to which L12 dimers bind in a sequential fashion forming a multimeric L10(L12)X complex. In terms of processing, one or more lysine residues are methylated.

Functionally, forms part of the ribosomal stalk which helps the ribosome interact with GTP-bound translation factors. In Brevibacillus brevis (strain 47 / JCM 6285 / NBRC 100599), this protein is Large ribosomal subunit protein uL11.